Consider the following 410-residue polypeptide: Peptidase T (410 aa).

H79 serves as a coordination point for Zn(2+). The active site involves D81. D142 serves as a coordination point for Zn(2+). E176 (proton acceptor) is an active-site residue. Residues E177, D199, and H381 each coordinate Zn(2+).

It belongs to the peptidase M20B family. Zn(2+) serves as cofactor.

The protein localises to the cytoplasm. The catalysed reaction is Release of the N-terminal residue from a tripeptide.. Functionally, cleaves the N-terminal amino acid of tripeptides. The chain is Peptidase T from Listeria monocytogenes serotype 4b (strain CLIP80459).